The primary structure comprises 247 residues: Adenosylcobinamide-GDP ribazoletransferase (247 aa).

5 helical membrane passes run 34-54 (IITF…VFMV), 57-77 (AWCG…LMTG), 113-133 (GGLA…ELAL), 138-158 (ILAS…LLMY), and 194-214 (VLLL…AIFI).

The protein belongs to the CobS family. Mg(2+) is required as a cofactor.

Its subcellular location is the cell inner membrane. The enzyme catalyses alpha-ribazole + adenosylcob(III)inamide-GDP = adenosylcob(III)alamin + GMP + H(+). It catalyses the reaction alpha-ribazole 5'-phosphate + adenosylcob(III)inamide-GDP = adenosylcob(III)alamin 5'-phosphate + GMP + H(+). Its pathway is cofactor biosynthesis; adenosylcobalamin biosynthesis; adenosylcobalamin from cob(II)yrinate a,c-diamide: step 7/7. Joins adenosylcobinamide-GDP and alpha-ribazole to generate adenosylcobalamin (Ado-cobalamin). Also synthesizes adenosylcobalamin 5'-phosphate from adenosylcobinamide-GDP and alpha-ribazole 5'-phosphate. The chain is Adenosylcobinamide-GDP ribazoletransferase from Shigella flexneri.